Consider the following 474-residue polypeptide: ATP synthase subunit beta (474 aa).

151–158 (GGAGVGKT) contacts ATP.

Belongs to the ATPase alpha/beta chains family. In terms of assembly, F-type ATPases have 2 components, CF(1) - the catalytic core - and CF(0) - the membrane proton channel. CF(1) has five subunits: alpha(3), beta(3), gamma(1), delta(1), epsilon(1). CF(0) has three main subunits: a(1), b(2) and c(9-12). The alpha and beta chains form an alternating ring which encloses part of the gamma chain. CF(1) is attached to CF(0) by a central stalk formed by the gamma and epsilon chains, while a peripheral stalk is formed by the delta and b chains.

The protein resides in the cell inner membrane. The enzyme catalyses ATP + H2O + 4 H(+)(in) = ADP + phosphate + 5 H(+)(out). Functionally, produces ATP from ADP in the presence of a proton gradient across the membrane. The catalytic sites are hosted primarily by the beta subunits. This chain is ATP synthase subunit beta, found in Paracoccus denitrificans (strain Pd 1222).